Reading from the N-terminus, the 200-residue chain is High mobility group protein B3 (200 aa).

N6-acetyllysine is present on Lys-3. 2 consecutive DNA-binding regions (HMG box) follow at residues 9-79 (PKGK…KDYG) and 93-161 (PKRP…ADYK). Residue Cys-23 is modified to Cysteine sulfonic acid (-SO3H); alternate. Residues Cys-23 and Cys-45 are joined by a disulfide bond. N6-acetyllysine occurs at positions 30 and 43. Cys-45 bears the Cysteine sulfonic acid (-SO3H); alternate mark. The interval 71–97 (YDREMKDYGPAKGGKKKKDPNAPKRPP) is disordered. Position 98 is a phosphoserine (Ser-98). Cys-104 is subject to Cysteine sulfonic acid (-SO3H). N6-acetyllysine occurs at positions 112 and 139. Residues 161 to 200 (KSKGKFDGAKGPAKVARKKVEEEEEEEEEEEEEEEEEEDE) form a disordered region. Residues 182-200 (EEEEEEEEEEEEEEEEEDE) show a composition bias toward acidic residues.

Belongs to the HMGB family. In terms of processing, reduction/oxidation of cysteine residues Cys-23, Cys-45 and Cys-104 and a possible intramolecular disulfide bond involving Cys-23 and Cys-45 give rise to different redox forms with specific functional activities in various cellular compartments: 1- fully reduced HMGB3 (HMGB3C23hC45hC104h), 2- disulfide HMGB3 (HMGB3C23-C45C104h) and 3- sulfonyl HMGB3 (HMGB3C23soC45soC104so). In terms of tissue distribution, expressed in bone marrow cells, specifically in primitive Lin-, c-kit+, Sca-1+, IL-7Ralpha- cells, and Ter119+ erythroid cells.

Its subcellular location is the nucleus. It is found in the chromosome. The protein resides in the cytoplasm. In terms of biological role, multifunctional protein with various roles in different cellular compartments. May act in a redox sensitive manner. Associates with chromatin and binds DNA with a preference for non-canonical DNA structures such as single-stranded DNA. Can bend DNA and enhance DNA flexibility by looping thus providing a mechanism to promote activities on various gene promoters. Proposed to be involved in the innate immune response to nucleic acids by acting as a cytoplasmic promiscuous immunogenic DNA/RNA sensor. Negatively regulates B-cell and myeloid cell differentiation. In hematopoietic stem cells may regulate the balance between self-renewal and differentiation. Involved in negative regulation of canonical Wnt signaling. This Mus musculus (Mouse) protein is High mobility group protein B3 (Hmgb3).